Here is a 303-residue protein sequence, read N- to C-terminus: Signal recognition particle receptor FtsY (303 aa).

GTP contacts are provided by residues 108-115 (GVNGVGKT), 190-194 (DTAGR), and 254-257 (TKLD).

The protein belongs to the GTP-binding SRP family. FtsY subfamily. Part of the signal recognition particle protein translocation system, which is composed of SRP and FtsY. SRP is a ribonucleoprotein composed of Ffh and a 4.5S RNA molecule.

It is found in the cell inner membrane. The protein resides in the cytoplasm. The catalysed reaction is GTP + H2O = GDP + phosphate + H(+). Its function is as follows. Involved in targeting and insertion of nascent membrane proteins into the cytoplasmic membrane. Acts as a receptor for the complex formed by the signal recognition particle (SRP) and the ribosome-nascent chain (RNC). Interaction with SRP-RNC leads to the transfer of the RNC complex to the Sec translocase for insertion into the membrane, the hydrolysis of GTP by both Ffh and FtsY, and the dissociation of the SRP-FtsY complex into the individual components. This chain is Signal recognition particle receptor FtsY, found in Rickettsia prowazekii (strain Madrid E).